We begin with the raw amino-acid sequence, 429 residues long: Inner membrane transport protein RhmT (429 aa).

Topologically, residues 1 to 16 are cytoplasmic; that stretch reads MSTALLDAVVKKNRVR. Residues 17 to 37 form a helical membrane-spanning segment; sequence LIPFMLALYVLAFLDRSNIGF. At 38–54 the chain is on the periplasmic side; that stretch reads AKQTYQIDTGLSNEAYA. Residues 55 to 75 traverse the membrane as a helical segment; sequence LGAGIFFVVYAFLGVPANLLM. At 76–81 the chain is on the cytoplasmic side; sequence RKLGAR. The chain crosses the membrane as a helical span at residues 82–102; it reads TWIGTTTLLWGFLSAAMAWAD. At 103 to 143 the chain is on the periplasmic side; it reads TEAKFLIVRTLLRAAEAGFFPGMIYLTSQWFPQRNRASIMG. Residues 144-164 form a helical membrane-spanning segment; sequence LFYMGAPLALTLGSPLSGALL. Residues 165-174 are Cytoplasmic-facing; sequence EMHGFMGHPG. Residues 175–195 form a helical membrane-spanning segment; sequence WFWMFVIEGLLAVGAGVFTFF. Topologically, residues 196–242 are periplasmic; that stretch reads WLDDTPEQARFLSKQEKTLLINQLASEEQQKVTSRLSDALRNGRVWQ. A helical membrane pass occupies residues 243-263; it reads LAIIYLTIQVAVYGLIFFLPT. The Cytoplasmic segment spans residues 264–274; sequence QVAALLGTKVG. The helical transmembrane segment at 275-295 threads the bilayer; sequence FTASVVTAIPWVAALFGTWLI. Residues 296–324 lie on the Periplasmic side of the membrane; it reads PRYSDKTGERRNVAALTLLAAGIGIGLSG. A helical transmembrane segment spans residues 325 to 345; the sequence is LLSPVMAIVALCVAAIGFIAV. Over 346–361 the chain is Cytoplasmic; sequence QPVFWTMPTQLLSGTA. Residues 362-382 form a helical membrane-spanning segment; it reads LAAGIGFVNLFGAVGGFIAPI. Topologically, residues 383–394 are periplasmic; the sequence is LRVKAETLFASD. Residues 395 to 415 form a helical membrane-spanning segment; that stretch reads AAGLLTLAAVAVIGSLIIFTL. The Cytoplasmic segment spans residues 416 to 429; it reads RVNRTVAQTDVAHH.

The protein belongs to the major facilitator superfamily. Phthalate permease family.

Its subcellular location is the cell inner membrane. In Escherichia coli (strain K12), this protein is Inner membrane transport protein RhmT (rhmT).